The chain runs to 525 residues: GMP synthase [glutamine-hydrolyzing] (525 aa).

The Glutamine amidotransferase type-1 domain maps to 8 to 207 (KILILDFGSQ…ALDICQCDAN (200 aa)). The Nucleophile role is filled by Cys-85. Residues His-181 and Glu-183 contribute to the active site. One can recognise a GMPS ATP-PPase domain in the interval 208 to 400 (WKPASIIEDA…LGLPYDMLYR (193 aa)). An ATP-binding site is contributed by 235–241 (SGGVDSS).

Homodimer.

The catalysed reaction is XMP + L-glutamine + ATP + H2O = GMP + L-glutamate + AMP + diphosphate + 2 H(+). It participates in purine metabolism; GMP biosynthesis; GMP from XMP (L-Gln route): step 1/1. Its function is as follows. Catalyzes the synthesis of GMP from XMP. This chain is GMP synthase [glutamine-hydrolyzing], found in Shewanella woodyi (strain ATCC 51908 / MS32).